Consider the following 459-residue polypeptide: MIQKQHESKLEVGQTFPVTIKRLGINGEGVGYFKRQVVFIPGALPGEEVVAETTKIQRGFAEAKVKKVRKASPHRVKAPCPVYEECGGCQLQHLDYKEQLNQKRDIVVQAFQKYMNNGLEEKIRPTLGMENPWHYRNKSQLQVGRKDEKVITGLYKQNSHQLIDIAHCMIQHKATNEATKVVRRILEKLNVSIYNEKKQKGLVRTIVTRTAVQTGEVQVTLITTKEELPNKEQFIAEVQKQMPAVKSIMQNVNWRKTSVIFGDKTFKLAGKEVIQETLGDLSFELSARAFFQLNPEQTVVLYNEAKKAAALTGNEKIVDAYCGVGTIGLWLANDAAEVRGMDVIPEAIADARKNAKRHGFTNTKYEAGKAEQWLPKWVKEGWRPDVIVVDPPRTGCDDKLLETILKVKPKQVVYVSCNPSSLARDVQALMKSYEVEYVQPVDMFPHTAHVENVVKLVRK.

Residues Lys9 to Lys67 enclose the TRAM domain. [4Fe-4S] cluster is bound by residues Cys80, Cys86, Cys89, and Cys168. Residues Gln292, Tyr321, Asp342, and Asp390 each contribute to the S-adenosyl-L-methionine site. The Nucleophile role is filled by Cys417.

The protein belongs to the class I-like SAM-binding methyltransferase superfamily. RNA M5U methyltransferase family.

This is an uncharacterized protein from Bacillus cereus (strain ATCC 10987 / NRS 248).